Here is a 131-residue protein sequence, read N- to C-terminus: Small ribosomal subunit protein uS11 (131 aa).

The protein belongs to the universal ribosomal protein uS11 family. Part of the 30S ribosomal subunit. Interacts with proteins S7 and S18. Binds to IF-3.

Located on the platform of the 30S subunit, it bridges several disparate RNA helices of the 16S rRNA. Forms part of the Shine-Dalgarno cleft in the 70S ribosome. This Syntrophotalea carbinolica (strain DSM 2380 / NBRC 103641 / GraBd1) (Pelobacter carbinolicus) protein is Small ribosomal subunit protein uS11.